Here is a 970-residue protein sequence, read N- to C-terminus: Rho GTPase-activating protein gacK (970 aa).

Positions 1 to 20 (MTLVYEKSSFVLIMAQIAEA) are cleaved as a signal peptide. 5 disordered regions span residues 30-49 (SNDL…SAAI), 258-285 (STCS…INQN), 312-446 (EITI…FSPT), 487-550 (STSN…NNNN), and 860-886 (TASS…NDDP). Composition is skewed to low complexity over residues 35–49 (STSA…SAAI) and 258–269 (STCSLSSNASNN). Residues 321-333 (IPLPPQSSSPPPT) are compositionally biased toward pro residues. Over residues 334–383 (RNNQSSPSPSSPQQQNIMPTPPSTSLTPPQSPTLSPSSSTHSTPTQTTTT) the composition is skewed to low complexity. Over residues 392–406 (PSTISQNNARKTQIP) the composition is skewed to polar residues. Positions 407–426 (TTTTTTTTTTTTTSTTSTTS) are enriched in low complexity. The span at 427–446 (PNPVVNNKNLNTPSSSFSPT) shows a compositional bias: polar residues. The Rho-GAP domain occupies 754 to 970 (IEDSELVEDN…LELIQFNKSL (217 aa)). A compositionally biased stretch (low complexity) spans 860–885 (TASSAATANSSSSGSGNGNSSPNNDD).

Its subcellular location is the cytoplasm. Rho GTPase-activating protein involved in the signal transduction pathway. This is Rho GTPase-activating protein gacK (gacK) from Dictyostelium discoideum (Social amoeba).